A 395-amino-acid chain; its full sequence is MSLSLVSYRLRKNPWVNIFLPVLAIFLIYIIFFQRDQSLLGLNGQSISQHKWAHEKENTFYFPFTKKYKMPKYSYKKKSGWLFNDHVEDIIPEGHIAHYDLNKLHSTSEAAVNKEHILILTPMQTFHQQYWDNLLQLNYPRELIELGFITPRTATGDLALKKLENAIKKVQTDKKTQRFSKITILRQNSQSFDKLMEKERHALDVQKERRAAMALARNELLFSTIGPHTSWVLWLDADIIETPPSLIQDMTKHNKAILAANIYQRFYDEEKKQPSIRPYDFNNWQESDTGLEIASQMGDDEIIVEGYAEIATYRPLMAHFYDANGVPGEEMALDGVGGGCTLVKAEVHRDGAMFPNFPFYHLIETEGFAKMAKRLNYDVFGLPNYLVYHIEEENH.

Topologically, residues 2–17 are cytoplasmic; it reads SLSLVSYRLRKNPWVN. The chain crosses the membrane as a helical; Signal-anchor for type II membrane protein span at residues 18 to 33; sequence IFLPVLAIFLIYIIFF. The Lumenal portion of the chain corresponds to 34–395; that stretch reads QRDQSLLGLN…LVYHIEEENH (362 aa).

The protein belongs to the ANP1/MMN9/VAN1 family. The M-Pol I complex contains MNN9 and VAN1. The M-Pol II complex is composed of ANP1, MNN9, MNN10, MNN11 and HOC1.

It is found in the endoplasmic reticulum membrane. The protein localises to the golgi apparatus membrane. It functions in the pathway protein modification; protein glycosylation. Its function is as follows. The M-Pol I and M-Pol II complexes possess alpha-1,6-mannosyltransferase activity and are probably involved in the elongation of the mannan backbone of N-linked glycans on cell wall and periplasmic proteins. May also provide alpha-1,2-mannosyltransferase activity to the M-Pol I complex. This Saccharomyces cerevisiae (strain ATCC 204508 / S288c) (Baker's yeast) protein is Mannan polymerase complexes subunit MNN9 (MNN9).